Consider the following 430-residue polypeptide: Adenylosuccinate synthetase (430 aa).

GTP contacts are provided by residues 17-23 (GDEGKGK) and 45-47 (GHT). The Proton acceptor role is filled by Asp-18. Asp-18 and Gly-45 together coordinate Mg(2+). Residues 18–21 (DEGK), 43–46 (NAGH), Thr-139, Arg-153, Asn-229, Thr-244, and Arg-308 each bind IMP. His-46 functions as the Proton donor in the catalytic mechanism. Residue 304–310 (TVTGRRR) participates in substrate binding. GTP is bound by residues Arg-310, 336-338 (KLD), and 418-420 (GVG).

Belongs to the adenylosuccinate synthetase family. Homodimer. It depends on Mg(2+) as a cofactor.

It is found in the cytoplasm. It catalyses the reaction IMP + L-aspartate + GTP = N(6)-(1,2-dicarboxyethyl)-AMP + GDP + phosphate + 2 H(+). Its pathway is purine metabolism; AMP biosynthesis via de novo pathway; AMP from IMP: step 1/2. In terms of biological role, plays an important role in the de novo pathway and in the salvage pathway of purine nucleotide biosynthesis. Catalyzes the first committed step in the biosynthesis of AMP from IMP. The protein is Adenylosuccinate synthetase of Cryptococcus neoformans var. neoformans serotype D (strain JEC21 / ATCC MYA-565) (Filobasidiella neoformans).